Here is a 223-residue protein sequence, read N- to C-terminus: Homeobox protein egl-5 (223 aa).

A compositionally biased stretch (low complexity) spans 1-25 (MNTSTSAFDFGSSTASSAATSTTSS). Disordered stretches follow at residues 1-58 (MNTS…STEA) and 168-191 (KKEKQRVDDHTEHTPLLPANPPKG). The homeobox DNA-binding region spans 112–171 (SKKGRQTYQRYQTSVLEAKFQQSSYVSKKQREELRLQTQLTDRQIKIWFQNRRMKAKKEK).

Belongs to the Abd-B homeobox family. Interacts with the TCF transcription factor pop-1.

It is found in the nucleus. Involved in control of cell fate and pattern formation along the anterior-posterior axis, acting mainly in the tail. Required during embryonic and postembryonic development. Essential for the determination of specific neurons, including the PLM touch neurons. Plays a role in neural fate specification in the hermaphrodite-specific neuron (HSN)/PHB neuron lineage, acting in concert with T-box protein tbx-2 and the asymmetric cell division protein ham-1. Required for male gonadal fate determination, acting in parallel with a WNT/beta-catenin pathway, perhaps by recruiting pop-1 to male-specific gonadal target genes. Involved in development of the hermaphrodite hindgut, and for the response to rectal infection by the coryneform bacterium M.nematophilum. The chain is Homeobox protein egl-5 from Caenorhabditis elegans.